The primary structure comprises 352 residues: RING finger protein 39 (352 aa).

The segment at 20–67 (CPLCGGPFEDPVLLACEHSFCRSCLARCWGSPAAPGSEEATPSCPCCG) adopts an RING-type zinc-finger fold. The segment at 98-118 (PGARTGRRRGGRIPTMGCLDP) is disordered. A B30.2/SPRY domain is found at 142 to 352 (EDLPEDYPVV…APLRIVPGEA (211 aa)).

Expressed in the hippocampus. Expression is rapidly up-regulated in granule cells of the dentate gyrus after LTP induction.

It localises to the cytoplasm. It carries out the reaction S-ubiquitinyl-[E2 ubiquitin-conjugating enzyme]-L-cysteine + [acceptor protein]-L-lysine = [E2 ubiquitin-conjugating enzyme]-L-cysteine + N(6)-ubiquitinyl-[acceptor protein]-L-lysine.. It functions in the pathway protein modification; protein ubiquitination. In terms of biological role, plays an inhibitory role in anti-RNA viral innate immunity by targeting the adapter DDX3X and promoting its 'Lys-48'-linked polyubiquitination. Alternatively, enhances the cGAS-STING pathway activation by promoting 'Lys-63'-linked ubiquitination of STING1, facilitating the STING1-TBK1 complex formation and STING1 activation. The polypeptide is RING finger protein 39 (Rnf39) (Rattus norvegicus (Rat)).